We begin with the raw amino-acid sequence, 298 residues long: Protease HtpX homolog (298 aa).

Transmembrane regions (helical) follow at residues 14-34 (VVLL…AGYL) and 39-59 (YAMG…SMIF). H143 serves as a coordination point for Zn(2+). Residue E144 is part of the active site. H147 is a Zn(2+) binding site. The next 2 helical transmembrane spans lie at 158-178 (IAVA…RMLW) and 197-217 (IITL…ASLI). E226 is a binding site for Zn(2+).

This sequence belongs to the peptidase M48B family. The cofactor is Zn(2+).

It localises to the cell membrane. The polypeptide is Protease HtpX homolog (Streptococcus pyogenes serotype M3 (strain SSI-1)).